The sequence spans 117 residues: Small ribosomal subunit protein bS6 (117 aa).

Residues 96–117 (HAEGPSVQMQKRDERDNRRERR) are disordered. Basic and acidic residues predominate over residues 105-117 (QKRDERDNRRERR).

This sequence belongs to the bacterial ribosomal protein bS6 family.

Its function is as follows. Binds together with bS18 to 16S ribosomal RNA. In Ruegeria sp. (strain TM1040) (Silicibacter sp.), this protein is Small ribosomal subunit protein bS6.